The chain runs to 150 residues: MSDINEIEIPSRKDEIRQVTPKDPMHEIEDKSTYHAKIKKSDSGTVLGAIPLNSRSSSNSSVTSTGQSSRRVTKKTTKKKKKNACYFDTCSSAASKFIGDCNFCKGHFCSKHRLMENHACNGLTSCKEQLHQRNADKLEAEQTKAPKIQI.

Residues Met1–Lys82 form a disordered region. Ser2 is subject to N-acetylserine. Positions Asp23–Thr33 are enriched in basic and acidic residues. Phosphoserine is present on residues Ser43 and Ser54. Residues Asn53–Arg70 show a composition bias toward low complexity. A compositionally biased stretch (basic residues) spans Arg71 to Lys82. The AN1-type zinc finger occupies Lys79 to Glu128. Cys85, Cys90, Cys101, Cys104, Cys109, His112, His118, and Cys120 together coordinate Zn(2+).

It localises to the nucleus. In terms of biological role, may have a role in protecting cells from metalloid-induced proteotoxicity. This is AN1-type zinc finger protein TMC1 from Saccharomyces cerevisiae (strain ATCC 204508 / S288c) (Baker's yeast).